The following is a 214-amino-acid chain: Thiopurine S-methyltransferase (214 aa).

S-adenosyl-L-methionine-binding residues include tryptophan 10, leucine 44, glutamate 65, and arginine 122.

It belongs to the class I-like SAM-binding methyltransferase superfamily. TPMT family.

The protein localises to the cytoplasm. It catalyses the reaction S-adenosyl-L-methionine + a thiopurine = S-adenosyl-L-homocysteine + a thiopurine S-methylether.. The chain is Thiopurine S-methyltransferase from Teredinibacter turnerae (strain ATCC 39867 / T7901).